The primary structure comprises 114 residues: Hydrogenase maturation factor HypA (114 aa).

H2 is a Ni(2+) binding site. Zn(2+) contacts are provided by C73, C76, C89, and C92.

It belongs to the HypA/HybF family.

In terms of biological role, involved in the maturation of [NiFe] hydrogenases. Required for nickel insertion into the metal center of the hydrogenase. The chain is Hydrogenase maturation factor HypA from Desulfitobacterium hafniense (strain DSM 10664 / DCB-2).